A 284-amino-acid chain; its full sequence is Pseudopaline exporter CntI (284 aa).

10 consecutive transmembrane segments (helical) span residues 2 to 22, 34 to 54, 74 to 94, 96 to 116, 122 to 142, 147 to 167, 179 to 199, 209 to 229, 236 to 256, and 259 to 279; these read VLDLLKSGVLLAVLASFTFSV, LPAAEIVFFRSAIGTLLIYLL, GVMGALYLVCYFYAIAHIPLA, ASILAHMSPFFVILFSALFLG, AVYWLLLVVVLGALMIVKPFS, SVYAVVGLLSAVFAAGASVAI, IVFYFLAVATLVAIPLMWNDF, GLLLAIGVVSLLGQVFLTRAF, IVAVTRYIGIVFNAGWGWLFW, and VPDALTIAGGVLIVVACIALS. EamA domains lie at 8–138 and 151–279; these read SGVL…LMIV and VVGL…IALS.

The protein belongs to the EamA transporter family.

Its subcellular location is the cell inner membrane. Its function is as follows. Transports the metallophore pseudopaline, which is involved in the acquisition of nickel and zinc, and thus enables bacterial growth inside the host, where metal access is limited. Is probably involved in the export of pseudopaline. Essential for iron acquisition during the interaction with airway mucus secretions (AMS). The polypeptide is Pseudopaline exporter CntI (Pseudomonas aeruginosa (strain ATCC 15692 / DSM 22644 / CIP 104116 / JCM 14847 / LMG 12228 / 1C / PRS 101 / PAO1)).